The sequence spans 445 residues: Enolase 1 (445 aa).

Substrate contacts are provided by His164 and Glu173. Glu216 acts as the Proton donor in catalysis. Mg(2+) is bound by residues Asp251, Glu301, and Asp328. Positions 301 and 328 each coordinate substrate. The active-site Proton acceptor is the Lys353. Residues 380–383 (SHRS) and Lys404 each bind substrate.

It belongs to the enolase family. In terms of assembly, homodimer. It depends on Mg(2+) as a cofactor.

It localises to the cytoplasm. The catalysed reaction is (2R)-2-phosphoglycerate = phosphoenolpyruvate + H2O. It participates in carbohydrate degradation; glycolysis; pyruvate from D-glyceraldehyde 3-phosphate: step 4/5. The sequence is that of Enolase 1 (ENO1) from Hevea brasiliensis (Para rubber tree).